The primary structure comprises 170 residues: uncharacterized protein (170 aa).

Residues 15 to 81 adopt a coiled-coil conformation; it reads EAFDEKAEKE…EREKSKSAVS (67 aa). Residues 20-77 show a composition bias toward basic and acidic residues; the sequence is KAEKEKVEKEKALKEKTEKEKAEKEKAEKEKVEKEKAEKEKAAKEKAAKEKAEREKSK. The tract at residues 20-95 is disordered; that stretch reads KAEKEKVEKE…NQNSNKGNVE (76 aa). Residues 78–92 are compositionally biased toward polar residues; sequence SAVSPATTNQNSNKG. The chain crosses the membrane as a helical span at residues 98 to 118; the sequence is VAIGVLAGGAVTGVAVGGAYL.

Its subcellular location is the membrane. This is an uncharacterized protein from Dictyostelium discoideum (Social amoeba).